Consider the following 439-residue polypeptide: Guanine deaminase (439 aa).

Residues His82 and His84 each contribute to the Zn(2+) site. Substrate contacts are provided by residues 84–87 (HYPQ), 209–210 (RF), 237–240 (HLCE), and Asp327. His237 and Asp327 together coordinate Zn(2+).

The protein belongs to the metallo-dependent hydrolases superfamily. ATZ/TRZ family. Zn(2+) is required as a cofactor.

The catalysed reaction is guanine + H2O + H(+) = xanthine + NH4(+). The protein operates within purine metabolism; guanine degradation; xanthine from guanine: step 1/1. Catalyzes the hydrolytic deamination of guanine, producing xanthine and ammonia. This Escherichia coli (strain K12) protein is Guanine deaminase (guaD).